The chain runs to 264 residues: Glutamate racemase (264 aa).

Substrate contacts are provided by residues D10–S11 and Y42–G43. The active-site Proton donor/acceptor is the C73. N74–T75 lines the substrate pocket. The Proton donor/acceptor role is filled by C181. T182–H183 provides a ligand contact to substrate.

This sequence belongs to the aspartate/glutamate racemases family.

The catalysed reaction is L-glutamate = D-glutamate. It functions in the pathway cell wall biogenesis; peptidoglycan biosynthesis. Provides the (R)-glutamate required for cell wall biosynthesis. The polypeptide is Glutamate racemase (Thermoanaerobacter pseudethanolicus (strain ATCC 33223 / 39E) (Clostridium thermohydrosulfuricum)).